The sequence spans 188 residues: Large ribosomal subunit protein uL5 (188 aa).

This sequence belongs to the universal ribosomal protein uL5 family. As to quaternary structure, part of the 50S ribosomal subunit; part of the 5S rRNA/L5/L18/L25 subcomplex. Contacts the 5S rRNA and the P site tRNA. Forms a bridge to the 30S subunit in the 70S ribosome.

Functionally, this is one of the proteins that bind and probably mediate the attachment of the 5S RNA into the large ribosomal subunit, where it forms part of the central protuberance. In the 70S ribosome it contacts protein S13 of the 30S subunit (bridge B1b), connecting the 2 subunits; this bridge is implicated in subunit movement. Contacts the P site tRNA; the 5S rRNA and some of its associated proteins might help stabilize positioning of ribosome-bound tRNAs. This chain is Large ribosomal subunit protein uL5, found in Aquifex aeolicus (strain VF5).